Here is a 113-residue protein sequence, read N- to C-terminus: Cytochrome c55X (113 aa).

The N-terminal stretch at 1–26 is a signal peptide; that stretch reads MTVARHAVSRLGLALASFLLFPLALA. Heme c is bound by residues Cys-45, Cys-48, and His-49.

In terms of processing, binds 1 heme c group covalently per subunit.

It localises to the periplasm. In terms of biological role, monoheme c-type cytochrome. The chain is Cytochrome c55X (nirC) from Stutzerimonas stutzeri (Pseudomonas stutzeri).